Here is a 76-residue protein sequence, read N- to C-terminus: uncharacterized protein (76 aa).

3 consecutive transmembrane segments (helical) span residues 1–21, 35–55, and 56–76; these read MTAI…HLQL, CFDI…LLII, and NNKF…NTMI.

It localises to the cell membrane. This is an uncharacterized protein from Borreliella burgdorferi (strain ATCC 35210 / DSM 4680 / CIP 102532 / B31) (Borrelia burgdorferi).